Consider the following 379-residue polypeptide: Sulfate adenylyltransferase (379 aa).

Belongs to the sulfate adenylyltransferase family.

The catalysed reaction is sulfate + ATP + H(+) = adenosine 5'-phosphosulfate + diphosphate. The protein operates within sulfur metabolism; hydrogen sulfide biosynthesis; sulfite from sulfate: step 1/3. This is Sulfate adenylyltransferase (sat) from Pyrococcus abyssi (strain GE5 / Orsay).